A 367-amino-acid chain; its full sequence is MSGSQTLVVKLGTSVLTGGSRRLNRAHIVELVRQCAQQHAKGHRIVIVTSGAIAAGREHLGYPELPATIASKQLLAAVGQSRLIQLWEQLFSIYGIHIGQMLLTRADLEDRERFLNARDTMNALLDNRIVPVINENDAVATAEIKVGDNDNLSALAAILAGADKLLLLTDQAGLYTADPRNNPQAELIREVHGIDDALRGIAGDSVSGLGTGGMATKLQAADVACRAGIDVVIAAGSQVGVIADVIEGTPVGTRFHALETPLENRKRWIFGAPPAGEITVDDGAVTAIMERGSSLLPKGIRSVVGNFSRGEVIRIRNLSGRDLAHGVSRYNSDALRMLAGHHSQQISEILGYEYGPVAVHRDDMIVS.

Lysine 10 lines the ATP pocket. Substrate-binding residues include serine 50, aspartate 137, and asparagine 149. ATP is bound by residues 169-170 and 211-217; these read TD and TGGMATK. In terms of domain architecture, PUA spans 275 to 353; it reads AGEITVDDGA…QQISEILGYE (79 aa).

This sequence belongs to the glutamate 5-kinase family.

It is found in the cytoplasm. The enzyme catalyses L-glutamate + ATP = L-glutamyl 5-phosphate + ADP. Its pathway is amino-acid biosynthesis; L-proline biosynthesis; L-glutamate 5-semialdehyde from L-glutamate: step 1/2. In terms of biological role, catalyzes the transfer of a phosphate group to glutamate to form L-glutamate 5-phosphate. The chain is Glutamate 5-kinase from Yersinia enterocolitica serotype O:8 / biotype 1B (strain NCTC 13174 / 8081).